The primary structure comprises 377 residues: N-acetyldiaminopimelate deacetylase (377 aa).

The active site involves Asp-69. Glu-128 acts as the Proton acceptor in catalysis.

The protein belongs to the peptidase M20A family. N-acetyldiaminopimelate deacetylase subfamily.

The catalysed reaction is N-acetyl-(2S,6S)-2,6-diaminopimelate + H2O = (2S,6S)-2,6-diaminopimelate + acetate. The protein operates within amino-acid biosynthesis; L-lysine biosynthesis via DAP pathway; LL-2,6-diaminopimelate from (S)-tetrahydrodipicolinate (acetylase route): step 3/3. Catalyzes the conversion of N-acetyl-diaminopimelate to diaminopimelate and acetate. This is N-acetyldiaminopimelate deacetylase from Brevibacillus brevis (strain 47 / JCM 6285 / NBRC 100599).